We begin with the raw amino-acid sequence, 108 residues long: Circadian clock oscillator protein KaiB (108 aa).

The protein belongs to the KaiB family. Homodimer, interacts with KaiC. The KaiABC complex composition changes during the circadian cycle to control KaiC phosphorylation. Complexes KaiC(6), KaiA(2-4):KaiC(6), KaiB(6):KaiC(6) and KaiC(6):KaiB(6):KaiA(12) are among the most important forms, many form cooperatively. Undergoes a major conformational rearrangment; in the free state forms homotetramers as a dimer of dimers. When bound to the CI domain of KaiC switches to a monomeric thioredoxin-fold (KaiB(fs)). KaiB(fs) binds CikA, leading it to dephosphorylate phospho-RpaA.

Key component of the KaiABC oscillator complex, which constitutes the main circadian regulator in cyanobacteria. Complex composition changes during the circadian cycle to control KaiC phosphorylation. KaiA stimulates KaiC autophosphorylation, while KaiB sequesters KaiA, leading to KaiC autodephosphorylation. Phospho-Ser-431 KaiC accumulation triggers binding of KaiB to form the KaiB(6):KaiC(6) complex, leading to changes in output regulators CikA and SasA. KaiB switches to a thioredoxin-like fold (KaiB(fs)) when bound to KaiC. KaiB(6):KaiC(6) formation exposes a site for KaiA binding that sequesters KaiA from KaiC, making the KaiC(6):KaiB(6):KaiA(12) complex that results in KaiC autodephosphorylation. In terms of biological role, a metamorphic protein which reversibly switches between an inactive tetrameric fold and a rare, thioredoxin-like monomeric fold (KaiB(fs)). KaiB(fs) binds phospho-KaiC, KaiA and CikA. KaiA and CikA compete for binding to KaiB(fs), and KaiB(fs) and SasA compete for binding to KaiC, thus the clock oscillator and output signal pathway are tightly coupled. This is Circadian clock oscillator protein KaiB from Nostoc sp. (strain PCC 7120 / SAG 25.82 / UTEX 2576).